A 395-amino-acid chain; its full sequence is S-adenosylmethionine synthase (395 aa).

His16 serves as a coordination point for ATP. A Mg(2+)-binding site is contributed by Asp18. Glu44 contributes to the K(+) binding site. Residues Glu57 and Gln100 each contribute to the L-methionine site. The segment at 100–110 is flexible loop; sequence QSPDIAQGVDD. Residues 174–176, 241–242, Asp250, 256–257, Ala273, and Lys277 contribute to the ATP site; these read DAK, RF, and RK. An L-methionine-binding site is contributed by Asp250. Residue Lys281 participates in L-methionine binding.

This sequence belongs to the AdoMet synthase family. As to quaternary structure, homotetramer; dimer of dimers. Requires Mg(2+) as cofactor. The cofactor is K(+).

The protein localises to the cytoplasm. It catalyses the reaction L-methionine + ATP + H2O = S-adenosyl-L-methionine + phosphate + diphosphate. It functions in the pathway amino-acid biosynthesis; S-adenosyl-L-methionine biosynthesis; S-adenosyl-L-methionine from L-methionine: step 1/1. In terms of biological role, catalyzes the formation of S-adenosylmethionine (AdoMet) from methionine and ATP. The overall synthetic reaction is composed of two sequential steps, AdoMet formation and the subsequent tripolyphosphate hydrolysis which occurs prior to release of AdoMet from the enzyme. This Lactiplantibacillus plantarum (strain ATCC BAA-793 / NCIMB 8826 / WCFS1) (Lactobacillus plantarum) protein is S-adenosylmethionine synthase.